The chain runs to 231 residues: Proteasome subunit alpha type-2 (231 aa).

The protein belongs to the peptidase T1A family. As to quaternary structure, the 26S proteasome consists of a 20S proteasome core and two 19S regulatory subunits. The 20S proteasome core is composed of 28 subunits that are arranged in four stacked rings, resulting in a barrel-shaped structure. The two end rings are each formed by seven alpha subunits, and the two central rings are each formed by seven beta subunits. The catalytic chamber with the active sites is on the inside of the barrel.

It localises to the cytoplasm. Its subcellular location is the nucleus. Functionally, the proteasome is a multicatalytic proteinase complex which is characterized by its ability to cleave peptides with Arg, Phe, Tyr, Leu, and Glu adjacent to the leaving group at neutral or slightly basic pH. The proteasome has an ATP-dependent proteolytic activity. This Trypanosoma brucei brucei protein is Proteasome subunit alpha type-2.